The following is a 463-amino-acid chain: Protein MRG3-like (463 aa).

A helical membrane pass occupies residues 54–74; that stretch reads WVLSTGIVSFIAFNIWWVYWP. 4 TPR repeats span residues 84–118, 128–161, 358–389, and 409–442; these read KILR…CKAE, TGIE…FYNE, ELIR…ANEN, and SLAH…SEMI.

Belongs to the MGR3 family.

The protein localises to the membrane. The chain is Protein MRG3-like from Saccharomyces cerevisiae (strain ATCC 204508 / S288c) (Baker's yeast).